Here is a 245-residue protein sequence, read N- to C-terminus: tRNA (guanine-N(7)-)-methyltransferase (245 aa).

S-adenosyl-L-methionine is bound by residues Gly-70, 93-94 (EI), 126-127 (NA), and Leu-146. Residue Asp-149 is part of the active site. 224-226 (SEE) lines the S-adenosyl-L-methionine pocket.

Belongs to the class I-like SAM-binding methyltransferase superfamily. TrmB family.

It is found in the nucleus. The enzyme catalyses guanosine(46) in tRNA + S-adenosyl-L-methionine = N(7)-methylguanosine(46) in tRNA + S-adenosyl-L-homocysteine. It functions in the pathway tRNA modification; N(7)-methylguanine-tRNA biosynthesis. Its function is as follows. Catalyzes the formation of N(7)-methylguanine at position 46 (m7G46) in tRNA. In Aedes aegypti (Yellowfever mosquito), this protein is tRNA (guanine-N(7)-)-methyltransferase.